Reading from the N-terminus, the 314-residue chain is 4-hydroxy-3-methylbut-2-enyl diphosphate reductase (314 aa).

Cysteine 12 serves as a coordination point for [4Fe-4S] cluster. 2 residues coordinate (2E)-4-hydroxy-3-methylbut-2-enyl diphosphate: histidine 41 and histidine 74. Residues histidine 41 and histidine 74 each coordinate dimethylallyl diphosphate. Isopentenyl diphosphate is bound by residues histidine 41 and histidine 74. Cysteine 96 is a binding site for [4Fe-4S] cluster. (2E)-4-hydroxy-3-methylbut-2-enyl diphosphate is bound at residue histidine 124. Residue histidine 124 coordinates dimethylallyl diphosphate. Histidine 124 contributes to the isopentenyl diphosphate binding site. Glutamate 126 acts as the Proton donor in catalysis. Threonine 168 is a binding site for (2E)-4-hydroxy-3-methylbut-2-enyl diphosphate. [4Fe-4S] cluster is bound at residue cysteine 198. (2E)-4-hydroxy-3-methylbut-2-enyl diphosphate-binding residues include serine 226, serine 227, asparagine 228, and serine 270. Dimethylallyl diphosphate-binding residues include serine 226, serine 227, asparagine 228, and serine 270. The isopentenyl diphosphate site is built by serine 226, serine 227, asparagine 228, and serine 270.

Belongs to the IspH family. The cofactor is [4Fe-4S] cluster.

It catalyses the reaction isopentenyl diphosphate + 2 oxidized [2Fe-2S]-[ferredoxin] + H2O = (2E)-4-hydroxy-3-methylbut-2-enyl diphosphate + 2 reduced [2Fe-2S]-[ferredoxin] + 2 H(+). The enzyme catalyses dimethylallyl diphosphate + 2 oxidized [2Fe-2S]-[ferredoxin] + H2O = (2E)-4-hydroxy-3-methylbut-2-enyl diphosphate + 2 reduced [2Fe-2S]-[ferredoxin] + 2 H(+). Its pathway is isoprenoid biosynthesis; dimethylallyl diphosphate biosynthesis; dimethylallyl diphosphate from (2E)-4-hydroxy-3-methylbutenyl diphosphate: step 1/1. The protein operates within isoprenoid biosynthesis; isopentenyl diphosphate biosynthesis via DXP pathway; isopentenyl diphosphate from 1-deoxy-D-xylulose 5-phosphate: step 6/6. In terms of biological role, catalyzes the conversion of 1-hydroxy-2-methyl-2-(E)-butenyl 4-diphosphate (HMBPP) into a mixture of isopentenyl diphosphate (IPP) and dimethylallyl diphosphate (DMAPP). Acts in the terminal step of the DOXP/MEP pathway for isoprenoid precursor biosynthesis. The sequence is that of 4-hydroxy-3-methylbut-2-enyl diphosphate reductase from Ectopseudomonas mendocina (strain ymp) (Pseudomonas mendocina).